The following is a 461-amino-acid chain: Cysteine--tRNA ligase (461 aa).

Zn(2+) is bound at residue Cys28. The 'HIGH' region signature appears at 30 to 40; sequence VTIYDLCHIGH. Positions 209, 234, and 238 each coordinate Zn(2+). A 'KMSKS' region motif is present at residues 266–270; the sequence is KMSKS. Residue Lys269 coordinates ATP.

It belongs to the class-I aminoacyl-tRNA synthetase family. In terms of assembly, monomer. Zn(2+) serves as cofactor.

Its subcellular location is the cytoplasm. It carries out the reaction tRNA(Cys) + L-cysteine + ATP = L-cysteinyl-tRNA(Cys) + AMP + diphosphate. The polypeptide is Cysteine--tRNA ligase (Edwardsiella ictaluri (strain 93-146)).